The sequence spans 490 residues: 4-hydroxyphenylacetaldehyde synthase (490 aa).

Residues P97, H198, and H313 each coordinate L-phenylalanine. Residue K314 is modified to N6-(pyridoxal phosphate)lysine. F343 is an L-phenylalanine binding site.

The protein belongs to the group II decarboxylase family. In terms of assembly, homodimer. It depends on pyridoxal 5'-phosphate as a cofactor.

It catalyses the reaction L-tyrosine + O2 + H2O + H(+) = (4-hydroxyphenyl)acetaldehyde + H2O2 + NH4(+) + CO2. Its function is as follows. Catalyzes the production of 4-hydroxyphenylacetaldehyde (HPAA) directly from L-tyrosine, tyramine not being formed as an intermediate. This is 4-hydroxyphenylacetaldehyde synthase from Rhodiola rosea (Roseroot).